The chain runs to 424 residues: Serine--tRNA ligase (424 aa).

233-235 (TAE) lines the L-serine pocket. 264–266 (RRE) is a binding site for ATP. Residue Glu287 participates in L-serine binding. An ATP-binding site is contributed by 351–354 (EISS). Ser387 serves as a coordination point for L-serine.

The protein belongs to the class-II aminoacyl-tRNA synthetase family. Type-1 seryl-tRNA synthetase subfamily. In terms of assembly, homodimer. The tRNA molecule binds across the dimer.

It is found in the cytoplasm. The enzyme catalyses tRNA(Ser) + L-serine + ATP = L-seryl-tRNA(Ser) + AMP + diphosphate + H(+). The catalysed reaction is tRNA(Sec) + L-serine + ATP = L-seryl-tRNA(Sec) + AMP + diphosphate + H(+). The protein operates within aminoacyl-tRNA biosynthesis; selenocysteinyl-tRNA(Sec) biosynthesis; L-seryl-tRNA(Sec) from L-serine and tRNA(Sec): step 1/1. Its function is as follows. Catalyzes the attachment of serine to tRNA(Ser). Is also able to aminoacylate tRNA(Sec) with serine, to form the misacylated tRNA L-seryl-tRNA(Sec), which will be further converted into selenocysteinyl-tRNA(Sec). This is Serine--tRNA ligase from Cyanothece sp. (strain PCC 7425 / ATCC 29141).